Consider the following 217-residue polypeptide: tRNA (guanine-N(7)-)-methyltransferase (217 aa).

Residues glutamate 48, glutamate 73, asparagine 100, and aspartate 123 each coordinate S-adenosyl-L-methionine. The active site involves aspartate 123. Residues lysine 127 and aspartate 159 each coordinate substrate.

The protein belongs to the class I-like SAM-binding methyltransferase superfamily. TrmB family.

The enzyme catalyses guanosine(46) in tRNA + S-adenosyl-L-methionine = N(7)-methylguanosine(46) in tRNA + S-adenosyl-L-homocysteine. The protein operates within tRNA modification; N(7)-methylguanine-tRNA biosynthesis. Its function is as follows. Catalyzes the formation of N(7)-methylguanine at position 46 (m7G46) in tRNA. The polypeptide is tRNA (guanine-N(7)-)-methyltransferase (Leptospira interrogans serogroup Icterohaemorrhagiae serovar Lai (strain 56601)).